We begin with the raw amino-acid sequence, 767 residues long: Probable ubiquitin carboxyl-terminal hydrolase creB (767 aa).

Residues 49-462 form the USP domain; sequence YGMENYGNTC…CAYVLFYQET (414 aa). C58 serves as the catalytic Nucleophile. Disordered stretches follow at residues 107 to 140 and 232 to 263; these read EAEA…DSPE and ASKQ…KTPN. Over residues 250-263 the composition is skewed to polar residues; the sequence is SVDQSSSTGSKTPN. Catalysis depends on H413, which acts as the Proton acceptor. The disordered stretch occupies residues 490-767; the sequence is LKQNGFPQSP…LRKKSFSILS (278 aa). Composition is skewed to low complexity over residues 540–554 and 564–573; these read ESAP…SPLS and ERVTTVATPP. A coiled-coil region spans residues 574-641; that stretch reads KNDALAKKER…ASKAEEDRRL (68 aa). Positions 577-650 are enriched in basic and acidic residues; it reads ALAKKERARE…LSHENGKEKQ (74 aa). A compositionally biased stretch (basic residues) spans 656–667; the sequence is RLKRGSKSLSHR. Residues 690–700 show a composition bias toward polar residues; the sequence is STLSQTGPTSE. A compositionally biased stretch (low complexity) spans 701 to 713; sequence QQQQQQQQQQQQQ. The segment covering 731 to 749 has biased composition (basic and acidic residues); that stretch reads TIREDEQVNHKDSKHERTG. Basic residues predominate over residues 750–767; the sequence is HGKWRSFSLRKKSFSILS.

This sequence belongs to the peptidase C19 family. Interacts with creA, creC and qutD.

The enzyme catalyses Thiol-dependent hydrolysis of ester, thioester, amide, peptide and isopeptide bonds formed by the C-terminal Gly of ubiquitin (a 76-residue protein attached to proteins as an intracellular targeting signal).. In terms of biological role, ubiquitin thioesterase component of the regulatory network controlling carbon source utilization through ubiquitination and deubiquitination involving creA, creB, creC, creD and acrB. Deubiquitinates the creA catabolic repressor and the quinate permease qutD. Also plays a role in response to carbon starvation and the control of extracellular proteases activity. This chain is Probable ubiquitin carboxyl-terminal hydrolase creB (creB), found in Aspergillus fumigatus (strain CBS 144.89 / FGSC A1163 / CEA10) (Neosartorya fumigata).